Here is a 133-residue protein sequence, read N- to C-terminus: ATP synthase epsilon chain, chloroplastic (133 aa).

It belongs to the ATPase epsilon chain family. In terms of assembly, F-type ATPases have 2 components, CF(1) - the catalytic core - and CF(0) - the membrane proton channel. CF(1) has five subunits: alpha(3), beta(3), gamma(1), delta(1), epsilon(1). CF(0) has three main subunits: a, b and c.

It is found in the plastid. The protein localises to the chloroplast thylakoid membrane. Produces ATP from ADP in the presence of a proton gradient across the membrane. This chain is ATP synthase epsilon chain, chloroplastic, found in Helianthus annuus (Common sunflower).